Reading from the N-terminus, the 444-residue chain is Exodeoxyribonuclease 7 large subunit (444 aa).

Belongs to the XseA family. As to quaternary structure, heterooligomer composed of large and small subunits.

It localises to the cytoplasm. The enzyme catalyses Exonucleolytic cleavage in either 5'- to 3'- or 3'- to 5'-direction to yield nucleoside 5'-phosphates.. In terms of biological role, bidirectionally degrades single-stranded DNA into large acid-insoluble oligonucleotides, which are then degraded further into small acid-soluble oligonucleotides. The polypeptide is Exodeoxyribonuclease 7 large subunit (Rickettsia conorii (strain ATCC VR-613 / Malish 7)).